The following is a 456-amino-acid chain: Zinc finger protein 25 (456 aa).

The region spanning 8–79 (VTLKDVIVEF…EVEFPHRGFP (72 aa)) is the KRAB domain. C2H2-type zinc fingers lie at residues 118–140 (CECK…QHTH), 146–168 (YDCD…QKIH), 174–196 (YECK…LRTH), 202–224 (YECN…QKTH), 230–252 (FECT…QKTH), 258–280 (YECK…QRMH), 286–308 (YKCK…QRSH), 314–336 (YECK…QRTH), 342–364 (FECN…QRKH), 370–392 (YECT…QRTH), 398–420 (YACK…QRKH), and 426–448 (YECQ…QKTH).

Belongs to the krueppel C2H2-type zinc-finger protein family.

It localises to the nucleus. Functionally, may be involved in transcriptional regulation. This chain is Zinc finger protein 25 (ZNF25), found in Homo sapiens (Human).